Consider the following 241-residue polypeptide: Uridylate kinase (241 aa).

ATP is bound at residue Lys-12 to Gly-15. Gly-54 contributes to the UMP binding site. Residues Gly-55 and Arg-59 each contribute to the ATP site. Residues Asp-74 and Val-135 to Thr-142 contribute to the UMP site. 3 residues coordinate ATP: Thr-162, Tyr-168, and Asp-171.

The protein belongs to the UMP kinase family. In terms of assembly, homohexamer.

Its subcellular location is the cytoplasm. The enzyme catalyses UMP + ATP = UDP + ADP. The protein operates within pyrimidine metabolism; CTP biosynthesis via de novo pathway; UDP from UMP (UMPK route): step 1/1. Inhibited by UTP. Catalyzes the reversible phosphorylation of UMP to UDP. The polypeptide is Uridylate kinase (Sphingopyxis alaskensis (strain DSM 13593 / LMG 18877 / RB2256) (Sphingomonas alaskensis)).